Consider the following 177-residue polypeptide: Nucleoside triphosphate/diphosphate phosphatase (177 aa).

Arginine 23 (proton donor) is an active-site residue. The Mg(2+) site is built by asparagine 87, aspartate 103, aspartate 105, aspartate 107, aspartate 120, and glutamate 123.

This sequence belongs to the Ntdp family. Mg(2+) is required as a cofactor.

It catalyses the reaction a ribonucleoside 5'-triphosphate + H2O = a ribonucleoside 5'-diphosphate + phosphate + H(+). It carries out the reaction a ribonucleoside 5'-diphosphate + H2O = a ribonucleoside 5'-phosphate + phosphate + H(+). Its function is as follows. Has nucleoside phosphatase activity towards nucleoside triphosphates and nucleoside diphosphates. This is Nucleoside triphosphate/diphosphate phosphatase from Streptococcus uberis (strain ATCC BAA-854 / 0140J).